Reading from the N-terminus, the 384-residue chain is Putative RNA methyltransferase slr0064 (384 aa).

The 112-residue stretch at 53–164 (LLYRINLWSR…QNHCQLSLDS (112 aa)) folds into the THUMP domain.

It belongs to the methyltransferase superfamily.

In Synechocystis sp. (strain ATCC 27184 / PCC 6803 / Kazusa), this protein is Putative RNA methyltransferase slr0064.